Consider the following 5762-residue polypeptide: Mucin-5B (5762 aa).

A signal peptide spans 1–25 (MGAPSACRTLVLALAAMLVVPQAET). Residues 27-50 (GPVEPSWENAGHTMDGGAPTSSPT) form a disordered region. The VWFD 1 domain maps to 75 to 245 (RVCSTWGDFH…KLDGPTEQCP (171 aa)). Cystine bridges form between cysteine 77–cysteine 207 and cysteine 99–cysteine 244. N-linked (GlcNAc...) asparagine glycosylation is present at asparagine 145. Residue glutamate 194 coordinates Cu(2+). Asparagine 201 and asparagine 254 each carry an N-linked (GlcNAc...) asparagine glycan. Histidine 311 and histidine 358 together coordinate Cu(2+). In terms of domain architecture, TIL 1 spans 329-385 (CPLNMQHQECGSPCTDTCSNPQRAQLCEDHCVDGCFCPPGTVLDDITHSGCLPLGQC). The N-linked (GlcNAc...) asparagine glycan is linked to asparagine 401. Residues 423–598 (GTCSVQGGAH…NTWKAQAACA (176 aa)) enclose the VWFD 2 domain. 3 disulfides stabilise this stretch: cysteine 425/cysteine 562, cysteine 447/cysteine 597, and cysteine 469/cysteine 477. Residue asparagine 515 is glycosylated (N-linked (GlcNAc...) asparagine). TIL domains are found at residues 695 to 752 (CPKS…AQEC) and 805 to 855 (NSSA…EEDC). N-linked (GlcNAc...) asparagine glycosylation is present at asparagine 805. One can recognise a VWFC 1 domain in the interval 855–927 (CPCVHNEATY…EYILAQDYCG (73 aa)). Positions 893 to 1062 (GTCVAYGDGH…NSWKLSPSCP (170 aa)) constitute a VWFD 3 domain. Cystine bridges form between cysteine 895–cysteine 1026, cysteine 917–cysteine 1061, cysteine 926–cysteine 1023, and cysteine 944–cysteine 951. Asparagine 929 carries N-linked (GlcNAc...) asparagine glycosylation. N-linked (GlcNAc...) asparagine glycosylation is found at asparagine 1276 and asparagine 1292. The stretch at 1333-1432 (CVREVCRWSS…RVLCCEYVPC (100 aa)) is one Cys-rich subdomain 1 repeat. Residues 1333–4228 (CVREVCRWSS…RVFCCNYGHC (2896 aa)) are 7 X Cys-rich subdomain repeats. C-linked (Man) tryptophan glycosylation occurs at tryptophan 1340. 2 disordered regions span residues 1437-1462 (APGT…QTTA) and 1480-1502 (LTSQ…GTTT). The segment covering 1450–1462 (TEPAVPTPTQTTA) has biased composition (low complexity). The stretch at 1503–1604 (CQPRCQWTEW…VLCCSDDHCR (102 aa)) is one Cys-rich subdomain 2 repeat. Tryptophan 1509 carries C-linked (Man) tryptophan glycosylation. The N-linked (GlcNAc...) asparagine glycan is linked to asparagine 1556. The segment at 1607-1783 (ATTPPPTTEL…NTTTSQGTTR (177 aa)) is disordered. Positions 1614–1624 (TELETATTTTT) are enriched in low complexity. 2 stretches are compositionally biased toward polar residues: residues 1625-1638 (QALF…SSPG) and 1645-1662 (ASTT…SPRY). Over residues 1663 to 1684 (TSTLGTATTGGPTTPAGSTEPT) the composition is skewed to low complexity. Positions 1689 to 1706 (ATSTLPTRSALPGTTGSL) are enriched in polar residues. 2 stretches are compositionally biased toward low complexity: residues 1739–1756 (EPLT…LSTS) and 1765–1777 (TETT…NTTT). The N-linked (GlcNAc...) asparagine glycan is linked to asparagine 1774. The Cys-rich subdomain 3 repeat unit spans residues 1784–1885 (CQPKCEWTEW…VLCCDDYSHC (102 aa)). The C-linked (Man) tryptophan glycan is linked to tryptophan 1790. The span at 1890 to 1987 (ATSSTATPSS…TSVTPIPSSS (98 aa)) shows a compositional bias: low complexity. Disordered regions lie at residues 1890 to 2019 (ATSS…TAHT), 2031 to 2100 (GATG…GTTH), 2114 to 2211 (TGSM…HTVR), and 2242 to 2302 (TGTT…SSPT). Residues 1890-2199 (ATSSTATPSS…VPNTMATTHG (310 aa)) form an 11 X approximate tandem repeats, Ser/Thr-rich region. Residues 1988 to 1997 (LGTTWTRLSQ) are compositionally biased toward polar residues. Over residues 1998–2019 (TTTPTATMSTATPSSTPETAHT) the composition is skewed to low complexity. Positions 2114–2181 (TGSMATPSSS…TSNTVTPSSA (68 aa)) are enriched in low complexity. The segment covering 2182 to 2199 (LGTTHTPPVPNTMATTHG) has biased composition (polar residues). Residues 2313–2414 (GCEPQCAWSE…RVFCCNYGHC (102 aa)) form a Cys-rich subdomain 4 repeat. Tryptophan 2320 carries a C-linked (Man) tryptophan glycan. Residues 2419-2756 (ATSSTAMPSS…VPNTTATTHG (338 aa)) are 11 X approximate tandem repeats, Ser/Thr-rich. 3 disordered regions span residues 2443 to 2462 (ATTT…PGTT), 2473 to 2522 (TVTV…ATAL), and 2556 to 2861 (TTPT…PTSA). Low complexity predominate over residues 2556 to 2738 (TTPTATMSTA…TSSTVTPSSA (183 aa)). A compositionally biased stretch (polar residues) spans 2739 to 2786 (LGTTHTPPVPNTTATTHGRSLSPSSPHTVRTAWTSATSGTLGTTHITE). Asparagine 2749 carries an N-linked (GlcNAc...) asparagine glycan. The segment covering 2787–2861 (PSTGTSHTPA…TLLPSSPTSA (75 aa)) has biased composition (low complexity). An HAT 1 repeat occupies 2854–2886 (LPSSPTSAPITTVVTMGCEPQCAWSEWLDYSYP). The stretch at 2871–2971 (CEPQCAWSEW…RVFCCNYGHC (101 aa)) is one Cys-rich subdomain 5 repeat. Tryptophan 2877 is a glycosylation site (C-linked (Man) tryptophan). Residues 2976–3456 (ATSSTATPSS…VPNTTATTHG (481 aa)) are 17 X approximate tandem repeats, Ser/Thr-rich. Low complexity-rich tracts occupy residues 3001-3017 (TTTA…STPG) and 3026-3049 (TSTA…RTAT). Disordered stretches follow at residues 3001 to 3049 (TTTA…RTAT), 3256 to 3357 (TTPT…GTTH), 3371 to 3469 (TGSM…TVRT), and 3481 to 3561 (TTHI…PTSA). Over residues 3371 to 3438 (TGSMATPSSS…TSSTVTPSSA (68 aa)) the composition is skewed to low complexity. Residues 3439–3456 (LGTTHTPPVPNTTATTHG) show a composition bias toward polar residues. Residue asparagine 3449 is glycosylated (N-linked (GlcNAc...) asparagine). Low complexity predominate over residues 3487–3561 (PSTVTSHTPA…TLLPSSPTSA (75 aa)). The stretch at 3554-3586 (LPSSPTSAPITTVVTTGCEPQCAWSEWLDYSYP) is one HAT 2 repeat. The Cys-rich subdomain 6 repeat unit spans residues 3571–3671 (CEPQCAWSEW…RVFCCNYGHC (101 aa)). Residue tryptophan 3577 is glycosylated (C-linked (Man) tryptophan). The 11 X approximate tandem repeats, Ser/Thr-rich stretch occupies residues 3676–4013 (ATSSTATPSS…VPNTTATTHG (338 aa)). Disordered regions lie at residues 3699 to 3779 (TATT…ATAL), 3813 to 3917 (TTPT…HTPT), and 3956 to 4118 (ATGS…PTSA). Residues 3956–3995 (ATGSTTNPSSTPGTTPIPPVLTTTATTPAATSSTVTPSSA) show a composition bias toward low complexity. The segment covering 3996 to 4043 (LGTTHTPPVPNTTATTHGRSLSPSSPHTVRTAWTSATSGTLGTTHITE) has biased composition (polar residues). N-linked (GlcNAc...) asparagine glycosylation occurs at asparagine 4006. The span at 4044-4118 (PSTGTSHTPA…TLLPSSPTSA (75 aa)) shows a compositional bias: low complexity. The HAT 3 repeat unit spans residues 4111 to 4143 (LPSSPTSAPITTVVTTGCEPQCAWSEWLDYSYP). Residues 4128-4228 (CEPQCAWSEW…RVFCCNYGHC (101 aa)) form a Cys-rich subdomain 7 repeat. Tryptophan 4134 carries a C-linked (Man) tryptophan glycan. The tract at residues 4233-4879 (ATSSTAMPSS…TLGTAHTPKV (647 aa)) is 23 X approximate tandem repeats, Ser/Thr-rich. Composition is skewed to low complexity over residues 4259–4274 (TTAS…STPG) and 4283–4389 (TSPA…PGTT). Disordered regions lie at residues 4259-4389 (TTAS…PGTT), 4428-4447 (ATTT…PGTT), 4458-4527 (TVTV…AIPS), and 4541-4750 (TTPT…ATSF). 7 N-linked (GlcNAc...) asparagine glycosylation sites follow: asparagine 4804, asparagine 4960, asparagine 5017, asparagine 5024, asparagine 5046, asparagine 5096, and asparagine 5111. Positions 5073 to 5261 (CICSMWGGSH…VPDSRKDGCW (189 aa)) constitute a VWFD 4 domain. Intrachain disulfides connect cysteine 5075-cysteine 5221, cysteine 5097-cysteine 5260, and cysteine 5121-cysteine 5132. An N-linked (GlcNAc...) asparagine glycan is attached at asparagine 5215. The region spanning 5412–5484 (CPCVGPDGFP…NPCCPETVCV (73 aa)) is the VWFC 2 domain. N-linked (GlcNAc...) asparagine glycans are attached at residues asparagine 5486, asparagine 5526, asparagine 5565, asparagine 5566, asparagine 5602, asparagine 5612, asparagine 5663, asparagine 5677, and asparagine 5721. The VWFC 3 domain occupies 5521–5587 (QLCSYNGTFY…VAGQCCGECV (67 aa)). 4 cysteine pairs are disulfide-bonded: cysteine 5653–cysteine 5705, cysteine 5672–cysteine 5719, cysteine 5681–cysteine 5735, and cysteine 5685–cysteine 5737. Residues 5653 to 5742 (CEEDSCQVRI…DECGCTPFCV (90 aa)) enclose the CTCK domain.

In terms of assembly, homomultimer; disulfide-linked. The N- and C-terminus mediate their assembly into higher order structures to form filaments. The CTCK domains of two polypeptides associate in the endoplasmic reticulum to generate intermolecularly disulfide-bonded dimers. These dimers progress to the Golgi apparatus, which is a more acidic environment than the endoplasmic reticulum. Under acidic conditions, the N-termini form non-covalent intermolecular interactions that juxtapose assemblies from different CTCK-linked dimers to produce long, disulfide-linked polymers that remain highly compact until secretion. Post-translationally, highly glycosylated. C-, N- and O-glycosylated. C-mannosylated in the Cys-rich subdomains probably on the first Trp residue of the WXXW motif. Highly O-glycosylated in the Ser/Thr-rich tandem repeat (TR) region. The repeat region is about 59% O-glycosylated with a high abundance of NeuAc(2)Hex(1)HexNac1-ol. As to expression, expressed on surface airway epithelia. Expressed mainly in mucous cells of submucosal glands of airway tissues. Highly expressed in the sublingual gland. Also found in submaxillary glands, endocervix, gall bladder, and pancreas.

It is found in the secreted. Gel-forming mucin that is thought to contribute to the lubricating and viscoelastic properties of whole saliva and cervical mucus. The protein is Mucin-5B (MUC5B) of Homo sapiens (Human).